We begin with the raw amino-acid sequence, 97 residues long: Peptide YY (97 aa).

An N-terminal signal peptide occupies residues 1 to 28; the sequence is MMSGRRSWPAMATVLLTLLVCLGELVDA. Residue S41 is modified to Phosphoserine. F64 carries the phenylalanine amide modification. The propeptide occupies 68 to 97; the sequence is DFSEALLSILLFPDREDPPVKSRPEGAYLW.

The protein belongs to the NPY family.

The protein resides in the secreted. In terms of biological role, this gut peptide inhibits exocrine pancreatic secretion, has a vasoconstrictory action and inhibitis jejunal and colonic mobility. This Bos taurus (Bovine) protein is Peptide YY (PYY).